A 446-amino-acid chain; its full sequence is N-succinylarginine dihydrolase 2 (446 aa).

Substrate is bound by residues 20-29 (VGLSPGNLAS), asparagine 111, and 138-139 (HR). Glutamate 175 is a catalytic residue. Arginine 212 is a substrate binding site. Histidine 246 is a catalytic residue. The substrate site is built by aspartate 248 and asparagine 361. Cysteine 367 acts as the Nucleophile in catalysis.

This sequence belongs to the succinylarginine dihydrolase family. In terms of assembly, homodimer.

The enzyme catalyses N(2)-succinyl-L-arginine + 2 H2O + 2 H(+) = N(2)-succinyl-L-ornithine + 2 NH4(+) + CO2. Its pathway is amino-acid degradation; L-arginine degradation via AST pathway; L-glutamate and succinate from L-arginine: step 2/5. Catalyzes the hydrolysis of N(2)-succinylarginine into N(2)-succinylornithine, ammonia and CO(2). In Caulobacter vibrioides (strain ATCC 19089 / CIP 103742 / CB 15) (Caulobacter crescentus), this protein is N-succinylarginine dihydrolase 2.